A 510-amino-acid chain; its full sequence is Probable cytosol aminopeptidase (510 aa).

Residues Lys254 and Asp259 each contribute to the Mn(2+) site. Residue Lys266 is part of the active site. Asp277, Asp336, and Glu338 together coordinate Mn(2+). The active site involves Arg340. The tract at residues 487 to 510 (AQPVKASPKTRPARKSTPAAKTRA) is disordered.

Belongs to the peptidase M17 family. It depends on Mn(2+) as a cofactor.

The protein localises to the cytoplasm. The catalysed reaction is Release of an N-terminal amino acid, Xaa-|-Yaa-, in which Xaa is preferably Leu, but may be other amino acids including Pro although not Arg or Lys, and Yaa may be Pro. Amino acid amides and methyl esters are also readily hydrolyzed, but rates on arylamides are exceedingly low.. The enzyme catalyses Release of an N-terminal amino acid, preferentially leucine, but not glutamic or aspartic acids.. Functionally, presumably involved in the processing and regular turnover of intracellular proteins. Catalyzes the removal of unsubstituted N-terminal amino acids from various peptides. This chain is Probable cytosol aminopeptidase, found in Polaromonas naphthalenivorans (strain CJ2).